The chain runs to 288 residues: Energy-coupling factor transporter ATP-binding protein EcfA2 (288 aa).

An ABC transporter domain is found at I3–S246. G40–S47 serves as a coordination point for ATP.

The protein belongs to the ABC transporter superfamily. Energy-coupling factor EcfA family. In terms of assembly, forms a stable energy-coupling factor (ECF) transporter complex composed of 2 membrane-embedded substrate-binding proteins (S component), 2 ATP-binding proteins (A component) and 2 transmembrane proteins (T component).

Its subcellular location is the cell membrane. ATP-binding (A) component of a common energy-coupling factor (ECF) ABC-transporter complex. Unlike classic ABC transporters this ECF transporter provides the energy necessary to transport a number of different substrates. The sequence is that of Energy-coupling factor transporter ATP-binding protein EcfA2 from Listeria welshimeri serovar 6b (strain ATCC 35897 / DSM 20650 / CCUG 15529 / CIP 8149 / NCTC 11857 / SLCC 5334 / V8).